A 105-amino-acid polypeptide reads, in one-letter code: Pyrimidine/purine nucleoside phosphorylase (105 aa).

This sequence belongs to the nucleoside phosphorylase PpnP family.

It catalyses the reaction a purine D-ribonucleoside + phosphate = a purine nucleobase + alpha-D-ribose 1-phosphate. The catalysed reaction is adenosine + phosphate = alpha-D-ribose 1-phosphate + adenine. The enzyme catalyses cytidine + phosphate = cytosine + alpha-D-ribose 1-phosphate. It carries out the reaction guanosine + phosphate = alpha-D-ribose 1-phosphate + guanine. It catalyses the reaction inosine + phosphate = alpha-D-ribose 1-phosphate + hypoxanthine. The catalysed reaction is thymidine + phosphate = 2-deoxy-alpha-D-ribose 1-phosphate + thymine. The enzyme catalyses uridine + phosphate = alpha-D-ribose 1-phosphate + uracil. It carries out the reaction xanthosine + phosphate = alpha-D-ribose 1-phosphate + xanthine. Catalyzes the phosphorolysis of diverse nucleosides, yielding D-ribose 1-phosphate and the respective free bases. Can use uridine, adenosine, guanosine, cytidine, thymidine, inosine and xanthosine as substrates. Also catalyzes the reverse reactions. The chain is Pyrimidine/purine nucleoside phosphorylase from Albidiferax ferrireducens (strain ATCC BAA-621 / DSM 15236 / T118) (Rhodoferax ferrireducens).